A 1088-amino-acid chain; its full sequence is DNA ligase 4 (1088 aa).

Disordered regions lie at residues 1-56 and 73-117; these read MALS…KFND and TTTT…TTTT. 2 stretches are compositionally biased toward low complexity: residues 25–53 and 73–90; these read DFKN…YNNK and TTTT…INKT. Residues 95–105 are compositionally biased toward acidic residues; that stretch reads DDIFDDEDEDS. The ATP site is built by Glu-414, Lys-416, Arg-421, Glu-467, Phe-514, Glu-574, Lys-579, Lys-596, and Lys-598. The active-site N6-AMP-lysine intermediate is the Lys-416. Position 467 (Glu-467) interacts with Mg(2+). Residue Glu-574 coordinates Mg(2+). BRCT domains follow at residues 827–917 and 984–1088; these read PTQN…PKYM and CWWS…EILD.

It belongs to the ATP-dependent DNA ligase family. It depends on Mg(2+) as a cofactor.

It is found in the nucleus. The catalysed reaction is ATP + (deoxyribonucleotide)n-3'-hydroxyl + 5'-phospho-(deoxyribonucleotide)m = (deoxyribonucleotide)n+m + AMP + diphosphate.. DNA ligase involved in DNA non-homologous end joining (NHEJ); required for double-strand break (DSB) repair. The polypeptide is DNA ligase 4 (lig4) (Dictyostelium discoideum (Social amoeba)).